A 616-amino-acid chain; its full sequence is UvrABC system protein C (616 aa).

The GIY-YIG domain maps to alanine 11–valine 85. One can recognise a UVR domain in the interval alanine 194–leucine 229.

This sequence belongs to the UvrC family. Interacts with UvrB in an incision complex.

The protein localises to the cytoplasm. The UvrABC repair system catalyzes the recognition and processing of DNA lesions. UvrC both incises the 5' and 3' sides of the lesion. The N-terminal half is responsible for the 3' incision and the C-terminal half is responsible for the 5' incision. The protein is UvrABC system protein C of Deinococcus geothermalis (strain DSM 11300 / CIP 105573 / AG-3a).